Reading from the N-terminus, the 386-residue chain is O-phospho-L-seryl-tRNA:Cys-tRNA synthase (386 aa).

Pyridoxal 5'-phosphate-binding positions include 89-90 (AR), asparagine 196, and 219-221 (SGH). Position 222 is an N6-(pyridoxal phosphate)lysine (lysine 222).

Belongs to the SepCysS family. Homodimer. Interacts with SepRS. The cofactor is pyridoxal 5'-phosphate.

The enzyme catalyses O-phospho-L-seryl-tRNA(Cys) + hydrogen sulfide + H(+) = L-cysteinyl-tRNA(Cys) + phosphate. Functionally, converts O-phospho-L-seryl-tRNA(Cys) (Sep-tRNA(Cys)) to L-cysteinyl-tRNA(Cys) (Cys-tRNA(Cys)). This is O-phospho-L-seryl-tRNA:Cys-tRNA synthase from Methanosarcina mazei (strain ATCC BAA-159 / DSM 3647 / Goe1 / Go1 / JCM 11833 / OCM 88) (Methanosarcina frisia).